We begin with the raw amino-acid sequence, 73 residues long: GHAAANCALARVATALTRRVPASRHGLAEGGTPPWTLLLAVAAVTVLGVVAVSLLRRALRVRYRFARPAALRA.

Residues 1–34 (GHAAANCALARVATALTRRVPASRHGLAEGGTPP) are Virion surface-facing. Residues 35 to 55 (WTLLLAVAAVTVLGVVAVSLL) form a helical membrane-spanning segment. Residues 56–73 (RRALRVRYRFARPAALRA) lie on the Intravirion side of the membrane.

This sequence belongs to the chordopoxvirinae L1 protein family.

The protein resides in the virion membrane. In Capra hircus (Goat), this protein is Protein F9 homolog.